The primary structure comprises 352 residues: ADP-ribosylation factor GTPase-activating protein GCS1 (352 aa).

The Arf-GAP domain occupies 11 to 127 (RRRLLQLQKI…LTCLCEDRVF (117 aa)). Residues 26 to 49 (CMDCGAPNPQWATPKFGAFICLEC) form a C4-type zinc finger. Over residues 138–151 (SKLSATSQTAASAT) the composition is skewed to low complexity. Disordered regions lie at residues 138 to 181 (SKLS…ANFQ) and 196 to 231 (NQSR…GSSN). Residue T151 is modified to Phosphothreonine. Position 157 is a phosphoserine (S157). T161 is modified (phosphothreonine). A Phosphoserine modification is found at S168. Positions 168 to 179 (SATPANSSNGAN) are enriched in polar residues. Position 170 is a phosphothreonine (T170). At S260 the chain carries Phosphoserine. A compositionally biased stretch (polar residues) spans 315–330 (NGNAEDSSTAGNTTHT). The tract at residues 315–352 (NGNAEDSSTAGNTTHTEYQKIDNNDKKNEQDEDKWDDF) is disordered. Over residues 331-343 (EYQKIDNNDKKNE) the composition is skewed to basic and acidic residues.

Its subcellular location is the cytoplasm. The protein localises to the mitochondrion. It localises to the perinuclear region. It is found in the golgi apparatus. GTPase-activating protein (GAP) for ARF1 and ARF2. Involved in intracellular vesicular transport. Required for transport from the trans-Golgi network. Implicated in the regulation of retrograde transport from the Golgi to the ER and in actin cytoskeletal organization. May be involved in the maintenance of mitochondrial morphology, possibly through organizing the actin cytoskeleton in Saccharomyces. The chain is ADP-ribosylation factor GTPase-activating protein GCS1 (GCS1) from Saccharomyces cerevisiae (strain ATCC 204508 / S288c) (Baker's yeast).